The following is a 953-amino-acid chain: Protein ENHANCER OF LHP1 1 (953 aa).

WD repeat units follow at residues 15–55 (GGSA…TLPP), 60–99 (HHQDGVTSLALSNDSTLLASGSIDHCVKLYKFPSGEFQTN), 102–143 (RFTL…RVLK), 144–183 (GHKGPVTGLDFHPNGELLASIDTTGTVLCWELQNGVVSFT), 192–232 (GFNT…KLFA), 236–275 (DHLEAICYLTWAPNGKYIATSGLDKQVLLWDVDKKQDIDR), and 277–316 (KFEERICCMSWKPNGNALSVIDAKGRYGVWESLVPSSMLS). Disordered stretches follow at residues 347–370 (SESLDDAMGDSDDGESHHTSRKRL), 385–419 (EELNDGSSLPSASEYRKKSHRGHREKQGARSGAFK), and 851–877 (ESKVQNPPASIQTSENTEAVMKSSATK). A compositionally biased stretch (acidic residues) spans 349–359 (SLDDAMGDSDD). Residues 853-877 (KVQNPPASIQTSENTEAVMKSSATK) are compositionally biased toward polar residues. Residues 900–907 (TKKDKSDD) carry the Nuclear localization signal motif. The interval 919 to 953 (KNPVNNVNKEDKGQEKEVNQGEARRSSNPFLKSTV) is disordered. Residues 926-943 (NKEDKGQEKEVNQGEARR) show a composition bias toward basic and acidic residues. The span at 944 to 953 (SSNPFLKSTV) shows a compositional bias: polar residues.

As to quaternary structure, interacts with EZA1/SWN, LHP1, SLD5 and CLF in the nucleus. In terms of tissue distribution, expressed in root meristematic zones, initiating lateral roots, young leaves and the shoot apex.

The protein localises to the nucleus. Its function is as follows. Participates in maintaining the H3K27me3 mark at target genes by interacting with LHP1-PRC2 complexes during replication, thus contributing to H3K27me3 inheritance. This Arabidopsis thaliana (Mouse-ear cress) protein is Protein ENHANCER OF LHP1 1.